The primary structure comprises 360 residues: Phospho-N-acetylmuramoyl-pentapeptide-transferase (360 aa).

The next 10 membrane-spanning stretches (helical) occupy residues 26–46 (AILS…IMIK), 70–90 (GTPT…ILLW), 94–114 (SNPY…IGFV), 132–152 (WKYF…YAYG), 168–188 (IMPQ…VGTS), 199–219 (GLAI…AWAT), 236–256 (ASEL…FLWF), 263–283 (VFMG…IAVL), 288–308 (LILV…ILQV), and 338–358 (VIVR…ATLK).

The protein belongs to the glycosyltransferase 4 family. MraY subfamily. The cofactor is Mg(2+).

It localises to the cell inner membrane. The catalysed reaction is UDP-N-acetyl-alpha-D-muramoyl-L-alanyl-gamma-D-glutamyl-meso-2,6-diaminopimeloyl-D-alanyl-D-alanine + di-trans,octa-cis-undecaprenyl phosphate = di-trans,octa-cis-undecaprenyl diphospho-N-acetyl-alpha-D-muramoyl-L-alanyl-D-glutamyl-meso-2,6-diaminopimeloyl-D-alanyl-D-alanine + UMP. It functions in the pathway cell wall biogenesis; peptidoglycan biosynthesis. Functionally, catalyzes the initial step of the lipid cycle reactions in the biosynthesis of the cell wall peptidoglycan: transfers peptidoglycan precursor phospho-MurNAc-pentapeptide from UDP-MurNAc-pentapeptide onto the lipid carrier undecaprenyl phosphate, yielding undecaprenyl-pyrophosphoryl-MurNAc-pentapeptide, known as lipid I. This chain is Phospho-N-acetylmuramoyl-pentapeptide-transferase, found in Vibrio campbellii (strain ATCC BAA-1116).